The primary structure comprises 277 residues: Basic leucine zipper 9 (277 aa).

Positions 73–141 (ADSPVSANKP…ESAKRSRRRK (69 aa)) are disordered. A Phosphoserine modification is found at Ser-100. Positions 109-118 (AGQSEMTNDP) are enriched in polar residues. The region spanning 120–183 (DLKRIRRMNS…RSAGTNNRVL (64 aa)) is the bZIP domain. Positions 122–141 (KRIRRMNSNRESAKRSRRRK) are basic motif. The Nuclear localization signal signature appears at 124-131 (IRRMNSNR). Residues 148 to 162 (LETQVDSLKGDNSTL) are leucine-zipper.

It belongs to the bZIP family. As to quaternary structure, homodimer. Interacts with BZIP1, BZIP2, BZIP10, BZIP11, BZIP25, BZIP44, BZIP53 and BZIP63. Post-translationally, phosphorylated. In terms of tissue distribution, expressed in roots, shoots, stems, young leaves, and flowers, mostly in vascular tissues (e.g. phloem).

The protein resides in the nucleus. Transcription factor. This chain is Basic leucine zipper 9 (BZIP9), found in Arabidopsis thaliana (Mouse-ear cress).